The primary structure comprises 222 residues: DNA-directed RNA polymerase V subunit 5A (222 aa).

It belongs to the archaeal Rpo5/eukaryotic RPB5 RNA polymerase subunit family. Component of the RNA polymerase V complex. In terms of tissue distribution, expressed in roots, leaves, siliques and seeds, and to a lower level, in flower buds and flowers.

The protein resides in the nucleus. Functionally, DNA-dependent RNA polymerase catalyzes the transcription of DNA into RNA using the four ribonucleoside triphosphates as substrates. Component of RNA polymerase V involved in RNA-directed DNA methylation-dependent (RdDM) silencing of endogenous repeated sequences, including transposable elements. Required for establishment of DNA methylation. This Arabidopsis thaliana (Mouse-ear cress) protein is DNA-directed RNA polymerase V subunit 5A (NRPE5A).